Consider the following 358-residue polypeptide: Small ribosomal subunit biogenesis GTPase RsgA 2 (358 aa).

Residues 106 to 261 form the CP-type G domain; it reads AEQLIAANVD…LIDTPGMREI (156 aa). GTP is bound by residues 151 to 154 and 203 to 211; these read SKAD and GSSGVGKST. Positions 284, 289, 291, and 297 each coordinate Zn(2+).

It belongs to the TRAFAC class YlqF/YawG GTPase family. RsgA subfamily. In terms of assembly, monomer. Associates with 30S ribosomal subunit, binds 16S rRNA. Zn(2+) serves as cofactor.

The protein resides in the cytoplasm. In terms of biological role, one of several proteins that assist in the late maturation steps of the functional core of the 30S ribosomal subunit. Helps release RbfA from mature subunits. May play a role in the assembly of ribosomal proteins into the subunit. Circularly permuted GTPase that catalyzes slow GTP hydrolysis, GTPase activity is stimulated by the 30S ribosomal subunit. This Vibrio parahaemolyticus serotype O3:K6 (strain RIMD 2210633) protein is Small ribosomal subunit biogenesis GTPase RsgA 2.